The primary structure comprises 27 residues: Omega-conotoxin RVIA (27 aa).

3 cysteine pairs are disulfide-bonded: C1/C16, C8/C19, and C15/C26. P4 and P7 each carry 4-hydroxyproline.

Belongs to the conotoxin O1 superfamily. As to expression, expressed by the venom duct.

The protein localises to the secreted. In terms of biological role, omega-conotoxins act at presynaptic membranes, they bind and block voltage-gated calcium channels (Cav). In Conus radiatus (Rayed cone), this protein is Omega-conotoxin RVIA.